A 177-amino-acid chain; its full sequence is Peptide deformylase (177 aa).

Fe cation-binding residues include Cys-99 and His-141. The active site involves Glu-142. His-145 serves as a coordination point for Fe cation.

It belongs to the polypeptide deformylase family. Requires Fe(2+) as cofactor.

The catalysed reaction is N-terminal N-formyl-L-methionyl-[peptide] + H2O = N-terminal L-methionyl-[peptide] + formate. In terms of biological role, removes the formyl group from the N-terminal Met of newly synthesized proteins. Requires at least a dipeptide for an efficient rate of reaction. N-terminal L-methionine is a prerequisite for activity but the enzyme has broad specificity at other positions. This chain is Peptide deformylase, found in Rhizorhabdus wittichii (strain DSM 6014 / CCUG 31198 / JCM 15750 / NBRC 105917 / EY 4224 / RW1) (Sphingomonas wittichii).